The sequence spans 364 residues: F-box/kelch-repeat protein At3g23880 (364 aa).

Residues 8–54 (MFSPHNLPLEMMEEILLRLPVKSLTRFKCVCSSWRSLISETLFALKH) enclose the F-box domain. 2 Kelch repeats span residues 169–215 (DYKV…SRSG) and 216–265 (IYIN…TLGD).

The sequence is that of F-box/kelch-repeat protein At3g23880 from Arabidopsis thaliana (Mouse-ear cress).